The following is a 136-amino-acid chain: uncharacterized protein (136 aa).

A signal peptide spans 1–19 (MMTAAKRLGLYSALRACSA). Residues 75–97 (FWFSHTCLVFGSNTILFASLNSF) traverse the membrane as a helical segment.

It is found in the membrane. This is an uncharacterized protein from Saccharomyces cerevisiae (strain ATCC 204508 / S288c) (Baker's yeast).